A 683-amino-acid chain; its full sequence is Eukaryotic translation initiation factor 3 subunit B (683 aa).

The segment at 1-25 (MAKKKGEEQDFEEEPNFDDPEGFVD) is disordered. Residues 9–25 (QDFEEEPNFDDPEGFVD) show a composition bias toward acidic residues. In terms of domain architecture, RRM spans 49 to 133 (NVIVVDNIPV…YTLLVNRFAD (85 aa)). WD repeat units follow at residues 199–238 (KRER…KVNK), 240–279 (AHSN…EKRT), 283–321 (DGMS…LLDM), 324–359 (IRVE…TLMA), 435–477 (EVKE…EPVL), and 522–567 (GDHY…KRVN). Residues 611 to 638 (MTRASKELIEKRAKLREQFTEYRSKRVK) adopt a coiled-coil conformation.

The protein belongs to the eIF-3 subunit B family. As to quaternary structure, component of the eukaryotic translation initiation factor 3 (eIF-3) complex.

Its subcellular location is the cytoplasm. Its function is as follows. RNA-binding component of the eukaryotic translation initiation factor 3 (eIF-3) complex, which is involved in protein synthesis of a specialized repertoire of mRNAs and, together with other initiation factors, stimulates binding of mRNA and methionyl-tRNAi to the 40S ribosome. The eIF-3 complex specifically targets and initiates translation of a subset of mRNAs involved in cell proliferation. The chain is Eukaryotic translation initiation factor 3 subunit B from Anopheles gambiae (African malaria mosquito).